We begin with the raw amino-acid sequence, 530 residues long: PC4 and SFRS1-interacting protein (530 aa).

The PWWP domain maps to 1–64 (MTRDFKPGDL…PKDIFPYSEN (64 aa)). Residue lysine 75 forms a Glycyl lysine isopeptide (Lys-Gly) (interchain with G-Cter in SUMO2) linkage. The segment at 88 to 349 (PKVKFSSQQA…VEKKRETSMD (262 aa)) is disordered. The segment covering 92-104 (FSSQQAATKQSNA) has biased composition (polar residues). 3 positions are modified to phosphoserine: serine 102, serine 105, and serine 106. Positions 113-135 (KETSVSKEDTDHEEKASNEDVTK) are enriched in basic and acidic residues. Threonine 115 and threonine 122 each carry phosphothreonine. Serine 129 is modified (phosphoserine). Phosphothreonine is present on threonine 141. A compositionally biased stretch (basic residues) spans 144-153 (AARRGRKRKA). Positions 146-156 (RRGRKRKAEKQ) match the Nuclear localization signal motif. The residue at position 167 (threonine 167) is a Phosphothreonine. Phosphoserine is present on residues serine 177 and serine 206. Positions 213-261 (EEDKSKKKGQEEKQPKKQPKKDEEGQKEEDKPRKEPDKKEGKKEVESKR) are enriched in basic and acidic residues. Position 271 is a phosphoserine (serine 271). A Phosphothreonine modification is found at threonine 272. Phosphoserine occurs at positions 273 and 275. The span at 274-283 (DSEEEGDDQE) shows a compositional bias: acidic residues. The span at 287–302 (KRKGGRNFQTAHRRNM) shows a compositional bias: basic residues. Residues 305 to 349 (GQHEKEAADRKRKQEEQMETEQQNKDEGKKPEVKKVEKKRETSMD) are compositionally biased toward basic and acidic residues. Coiled coils occupy residues 306–334 (QHEK…EGKK) and 371–395 (NRCI…KHTE). Residues 340-417 (VEKKRETSMD…VSQVIMEKST (78 aa)) form an integrase-binding domain (IBD) region. Serine 434 bears the Phosphoserine mark. Residue threonine 437 is modified to Phosphothreonine. Serine 443 is subject to Phosphoserine. Residues 446–473 (EQRQHEEANKTKDQGKKGPNKKLEKEQT) show a composition bias toward basic and acidic residues. Residues 446–530 (EQRQHEEANK…ISLKDSTLDN (85 aa)) are disordered. The span at 474 to 494 (GSKTLNGGSDAQDGNQPQHNG) shows a compositional bias: polar residues. Over residues 498 to 530 (EDSKDNHEASTKKKPSSEERETEISLKDSTLDN) the composition is skewed to basic and acidic residues. Serine 514 is subject to Phosphoserine. The residue at position 517 (arginine 517) is a Citrulline. Serine 522 bears the Phosphoserine mark. Phosphothreonine is present on threonine 527.

Belongs to the HDGF family. Monomer. Interacts with IFRD1/PC4. Isoform 2 interacts with SFRS1. Isoform 1 interacts (via IBD domain) with POGZ (via IBM motif) and CDCA7L (via IBM motifs). Interacts (via IBD domain) with KMT2A (via IBM motifs) with a moderate affinity whereas interacts with the KMT2A-MEN1 complex with a greater affinity; MEN1 enhances interaction of KMT2A with PSIP1. Interacts with fusion protein KMT2A-MLLT3. Interacts (via IBD domain) with IWS1 (via IBM motif), MED1 (via IBM motif) and DBF4 (via IBM motifs). In terms of assembly, (Microbial infection) Interacts (via IBD domain) with human HIV-1 integrase protein (HIV-1 IN), determining its nuclear localization, its tight association with chromatin and its protection from the proteasome. As to quaternary structure, (Microbial infection) Interacts with HIV-2 IN. Citrullinated by PADI4. As to expression, widely expressed. Expressed at high level in the thymus. Expressed in fetal and adult brain. Expressed in neurons, but not astrocytes. Markedly elevated in fetal as compared to adult brain. In the adult brain, expressed in the subventricular zone (SVZ), in hippocampus, and undetectable elsewhere. In the fetal brain, expressed in the germinal neuroepithelium and cortical plate regions.

Its subcellular location is the nucleus. In terms of biological role, transcriptional coactivator involved in neuroepithelial stem cell differentiation and neurogenesis. Involved in particular in lens epithelial cell gene regulation and stress responses. May play an important role in lens epithelial to fiber cell terminal differentiation. May play a protective role during stress-induced apoptosis. Isoform 2 is a more general and stronger transcriptional coactivator. Isoform 2 may also act as an adapter to coordinate pre-mRNA splicing. Cellular cofactor for lentiviral integration. In Homo sapiens (Human), this protein is PC4 and SFRS1-interacting protein (PSIP1).